The following is a 95-amino-acid chain: MGEIRLVNIGFGNIVSANRIVAIVSPESAPIKRIISEARERGTLIDATYGRRTRAVVITDSDHVVLSAVQPETVAHRLTARDASLAAAEEEEGEE.

Belongs to the RemA family.

The chain is Putative regulatory protein STH1338 from Symbiobacterium thermophilum (strain DSM 24528 / JCM 14929 / IAM 14863 / T).